The primary structure comprises 690 residues: uncharacterized protein (690 aa).

A disordered region spans residues 553 to 601 (DESELLENEDKSESLENEDKSESLENEDKSESLENEDKSESLENEKKEK). Positions 560–601 (NEDKSESLENEDKSESLENEDKSESLENEDKSESLENEKKEK) are enriched in basic and acidic residues.

This sequence belongs to the glycosyltransferase 2 family.

This is an uncharacterized protein from Rickettsia bellii (strain RML369-C).